Reading from the N-terminus, the 67-residue chain is MVRVPKNNNENQSKAVVRTYYEVEQDSIKLKNKKCPRCGSIMAHHMKPLERWACGKCGYTEFIGKSR.

4 residues coordinate Zn(2+): Cys-35, Cys-38, Cys-54, and Cys-57. The C4-type zinc finger occupies 35 to 57 (CPRCGSIMAHHMKPLERWACGKC).

It belongs to the eukaryotic ribosomal protein eS31 family. In terms of assembly, part of the 30S ribosomal subunit. Zn(2+) serves as cofactor.

This chain is Small ribosomal subunit protein eS31, found in Sulfolobus acidocaldarius (strain ATCC 33909 / DSM 639 / JCM 8929 / NBRC 15157 / NCIMB 11770).